The sequence spans 351 residues: Cell shape-determining protein MreB (351 aa).

ATP contacts are provided by residues 20-22 (TAN), 169-171 (GGT), 217-220 (ERIK), and 299-302 (GGAL).

This sequence belongs to the FtsA/MreB family. Forms polymers.

It is found in the cytoplasm. Its function is as follows. Forms membrane-associated dynamic filaments that are essential for cell shape determination. Acts by regulating cell wall synthesis and cell elongation, and thus cell shape. A feedback loop between cell geometry and MreB localization may maintain elongated cell shape by targeting cell wall growth to regions of negative cell wall curvature. The polypeptide is Cell shape-determining protein MreB (Haemophilus influenzae (strain ATCC 51907 / DSM 11121 / KW20 / Rd)).